The sequence spans 631 residues: Hepatocyte nuclear factor 1-alpha (631 aa).

Residues 1 to 31 are dimerization; it reads MVSKLSQLQTELLAALLESGLSKEALIQALG. Residues 1-32 enclose the HNF-p1 domain; the sequence is MVSKLSQLQTELLAALLESGLSKEALIQALGE. Residues 40–81 form a disordered region; it reads GEGPLDKGESCGGGRGELAELPNGLGETRGSEDETDDDGEDF. A Phosphoserine modification is found at Ser70. The residue at position 74 (Thr74) is a Phosphothreonine. The region spanning 87-182 is the POU-specific atypical domain; sequence KELENLSPEE…VAQQFTHAGQ (96 aa). Ser93 carries the post-translational modification Phosphoserine. Residue Lys117 forms a Glycyl lysine isopeptide (Lys-Gly) (interchain with G-Cter in ubiquitin) linkage. Interaction with DNA stretches follow at residues 130-132, 143-149, 155-158, and 203-206; these read QRE, HLSQHLN, KTQK, and RFKW. The interval 183-205 is disordered; the sequence is GGLIEEPTGDELPTKKGRRNRFK. Residues 197–205 carry the Nuclear localization signal motif; the sequence is KKGRRNRFK. A DNA-binding region (homeobox; HNF1-type) is located at residues 199-279; the sequence is GRRNRFKWGP…NRRKEEAFRH (81 aa). Ser247 carries the post-translational modification Phosphoserine. Interaction with DNA stretches follow at residues 263–265 and 270–273; these read RVY and NRRK. 2 disordered regions span residues 283 to 358 and 545 to 567; these read MDTY…GLEP and SDTE…TLHV. The segment covering 288–298 has biased composition (pro residues); sequence GPPPGPGPGPA. Ser313 is subject to Phosphoserine. The span at 325-353 shows a compositional bias: polar residues; that stretch reads PATSETAEVPSSSGGPLVTVSTPLHQVSP.

The protein belongs to the HNF1 homeobox family. Binds DNA as a dimer. Heterotetramer with PCBD1; formed by a dimer of dimers. Interacts with PCBD1. Interacts with BHLHE41. Interacts with NR5A2. Interacts with SPOP; this interaction promotes ubiquitination and degradation of HNF1A. In terms of processing, ubiquitinated in s SPOP-dependent manner; leading to prteasomal degradation. In terms of tissue distribution, liver.

It localises to the nucleus. Its function is as follows. Transcriptional activator that regulates the tissue specific expression of multiple genes, especially in pancreatic islet cells and in liver. Binds to the inverted palindrome 5'-GTTAATNATTAAC-3'. Activates the transcription of CYP1A2, CYP2E1 and CYP3A11. Functionally, (Microbial infection) Plays a crucial role for hepatitis B virus gene transcription and DNA replication. Mechanistically, synergistically cooperates with NR5A2 to up-regulate the activity of one of the critical cis-elements in the hepatitis B virus genome enhancer II (ENII). The polypeptide is Hepatocyte nuclear factor 1-alpha (HNF1A) (Homo sapiens (Human)).